A 293-amino-acid chain; its full sequence is Elongation factor Ts (293 aa).

Residues 80–83 are involved in Mg(2+) ion dislocation from EF-Tu; that stretch reads TDFV.

The protein belongs to the EF-Ts family.

It is found in the cytoplasm. Its function is as follows. Associates with the EF-Tu.GDP complex and induces the exchange of GDP to GTP. It remains bound to the aminoacyl-tRNA.EF-Tu.GTP complex up to the GTP hydrolysis stage on the ribosome. The polypeptide is Elongation factor Ts (Aeromonas hydrophila subsp. hydrophila (strain ATCC 7966 / DSM 30187 / BCRC 13018 / CCUG 14551 / JCM 1027 / KCTC 2358 / NCIMB 9240 / NCTC 8049)).